The primary structure comprises 165 residues: Phosphopantetheine adenylyltransferase (165 aa).

Serine 8 is a binding site for substrate. ATP is bound by residues 8-9 (SF) and histidine 16. Positions 40, 72, and 86 each coordinate substrate. ATP-binding positions include 87–89 (GLR), glutamate 97, and 122–128 (YSFLSSS).

This sequence belongs to the bacterial CoaD family. As to quaternary structure, homohexamer. Requires Mg(2+) as cofactor.

It is found in the cytoplasm. It carries out the reaction (R)-4'-phosphopantetheine + ATP + H(+) = 3'-dephospho-CoA + diphosphate. The protein operates within cofactor biosynthesis; coenzyme A biosynthesis; CoA from (R)-pantothenate: step 4/5. Functionally, reversibly transfers an adenylyl group from ATP to 4'-phosphopantetheine, yielding dephospho-CoA (dPCoA) and pyrophosphate. The sequence is that of Phosphopantetheine adenylyltransferase from Synechococcus sp. (strain WH7803).